We begin with the raw amino-acid sequence, 730 residues long: MPKNSKVVKRELDDDVTESVKDLLSNEDSADDAFKTSELIVDGQEEKDTDVEEGSEVEDERPAWSSKLQYILAQVGFSVGLGNVWRFPYLCQKNGGGAYLLPYLILLMVIGIPLFFLELSVGQRIRRGSIGVWNYISPKLGGIGFASCVVCYFVALYYNVIIGWSLFYFSQSFQQPLPWDQCPLVKNASHTFVEPECEQSSATTYYWYREALNISSSISESGGLNWKMTICLLAAWVMVCLAMIKGIQSSGKIIYFSSLFPYVVLICFLIRALLLNGSIDGIRHMFTPKLEIMLEPKVWREAATQVFFALGLGFGGVIAFSSYNKRDNNCHFDAVLVSFINFFTSVLATLVVFAVLGFKANVINEKCITQNSQTIMKFLKMGNISQDIIPHHINLSAVTAEDYHLVYDIIQKVKEEEFPALHLNSCKIEEELNKAVQGTGLAFIAFTEAMTHFPASPFWSVMFFLMLVNLGLGSMFGTIEGIVTPIVDTFKVRKEILTVICCLLAFCIGLIFVQRSGNYFVTMFDDYSATLPLLIVVILENIAVCFVYGIDKFMEDLKDMLGFAPSRYYYYMWKYVSPLMLLSLLIASVVNMGLSPPGYNAWIEDKASEEFLSYPTWGLVVCVSLVVFAVLPVPVVFIVRRFNLIDDSSGNLASVTYKRGRVLNEPVNLEGDDTSLIHGKISSEMPSPNFGKNIYRKQSGSPTLDTAPNGRYGIGYLMADIMPDMPESDL.

Residues 1–24 (MPKNSKVVKRELDDDVTESVKDLL) form a disordered region. At 1–70 (MPKNSKVVKR…RPAWSSKLQY (70 aa)) the chain is on the extracellular side. A phosphoserine mark is found at serine 25 and serine 55. A run of 3 helical transmembrane segments spans residues 71–91 (ILAQ…PYLC), 97–117 (GAYL…LFFL), and 149–169 (VVCY…LFYF). At 170 to 223 (SQSFQQPLPWDQCPLVKNASHTFVEPECEQSSATTYYWYREALNISSSISESGG) the chain is on the cytoplasmic side. 2 consecutive transmembrane segments (helical) span residues 224 to 244 (LNWK…LAMI) and 253 to 273 (IIYF…IRAL). Residue asparagine 276 is glycosylated (N-linked (GlcNAc...) asparagine). A run of 2 helical transmembrane segments spans residues 302-322 (AATQ…AFSS) and 335-355 (VLVS…VFAV). Over 356-458 (LGFKANVINE…AMTHFPASPF (103 aa)) the chain is Cytoplasmic. 5 helical membrane-spanning segments follow: residues 459 to 479 (WSVM…FGTI), 494 to 514 (KEIL…IFVQ), 530 to 550 (TLPL…VYGI), 575 to 595 (YVSP…MGLS), and 619 to 639 (LVVC…VFIV). Over 640–730 (RRFNLIDDSS…IMPDMPESDL (91 aa)) the chain is Extracellular. Phosphoserine is present on residues serine 687, serine 699, and serine 701.

This sequence belongs to the sodium:neurotransmitter symporter (SNF) (TC 2.A.22) family. SLC6A15 subfamily.

It is found in the membrane. The enzyme catalyses L-leucine(in) + Na(+)(in) = L-leucine(out) + Na(+)(out). The catalysed reaction is L-isoleucine(in) + Na(+)(in) = L-isoleucine(out) + Na(+)(out). It carries out the reaction L-methionine(in) + Na(+)(in) = L-methionine(out) + Na(+)(out). It catalyses the reaction L-proline(in) + Na(+)(in) = L-proline(out) + Na(+)(out). The enzyme catalyses L-alanine(in) + Na(+)(in) = L-alanine(out) + Na(+)(out). The catalysed reaction is L-asparagine(in) + Na(+)(in) = L-asparagine(out) + Na(+)(out). It carries out the reaction L-valine(in) + Na(+)(in) = L-valine(out) + Na(+)(out). It catalyses the reaction L-cysteine(in) + Na(+)(in) = L-cysteine(out) + Na(+)(out). The enzyme catalyses L-glutamine(in) + Na(+)(in) = L-glutamine(out) + Na(+)(out). The catalysed reaction is L-serine(in) + Na(+)(in) = L-serine(out) + Na(+)(out). It carries out the reaction L-threonine(in) + Na(+)(in) = L-threonine(out) + Na(+)(out). It catalyses the reaction L-pipecolate(in) + Na(+)(in) = L-pipecolate(out) + Na(+)(out). The enzyme catalyses L-phenylalanine(in) + Na(+)(in) = L-phenylalanine(out) + Na(+)(out). In terms of biological role, functions as a sodium-dependent neutral amino acid transporter. Exhibits preference for the branched-chain amino acids, particularly leucine, valine and isoleucine and methionine. Can also transport low-affinity substrates such as alanine, phenylalanine, glutamine and pipecolic acid. Mediates the saturable, pH-sensitive and electrogenic cotransport of proline and sodium ions with a stoichiometry of 1:1. May have a role as transporter for neurotransmitter precursors into neurons. In contrast to other members of the neurotransmitter transporter family, does not appear to be chloride-dependent. In Pongo abelii (Sumatran orangutan), this protein is Sodium-dependent neutral amino acid transporter B(0)AT2 (SLC6A15).